The sequence spans 197 residues: MSASRFIKCVTVGDGAVGKTCLLISYTSNTFPTDYVPTVFDNFSANVVVNGATVNLGLWDTAGQEDYNRLRPLSYRGADVFILAFSLISKASYENVSKKWIPELKHYAPGVPIVLVGTKLDLRDDKQFFIDHPGAVPITTAQGEELRKLIGAPAYIECSSKTQQNVKAVFDAAIKVVLQPPKTKKKKSKAQKACSIL.

13–20 (GDGAVGKT) contributes to the GTP binding site. The short motif at 35–43 (YVPTVFDNF) is the Effector region element. GTP-binding positions include 60–64 (DTAGQ) and 118–121 (TKLD). Cysteine methyl ester is present on cysteine 194. Cysteine 194 carries S-geranylgeranyl cysteine lipidation. A propeptide spans 195-197 (SIL) (removed in mature form).

It belongs to the small GTPase superfamily. Rho family.

It localises to the cytoplasm. The protein resides in the membrane. Functionally, inactive GDP-bound Rho GTPases reside in the cytosol, are found in a complex with Rho GDP-dissociation inhibitors (Rho GDIs), and are released from the GDI protein in order to translocate to membranes upon activation. This Beta vulgaris (Sugar beet) protein is Rac-like GTP-binding protein RHO1 (RHO1).